Consider the following 293-residue polypeptide: Glycine betaine-binding protein OpuAC (293 aa).

Positions 1–20 are cleaved as a signal peptide; sequence MLKKIIGIGVSAMLALSLAA. Cys-21 is lipidated: N-palmitoyl cysteine. Residue Cys-21 is the site of S-diacylglycerol cysteine attachment.

In terms of assembly, the complex is composed of two ATP-binding proteins (OpuAA), two transmembrane proteins (OpuAB) and a solute-binding protein (OpuAC). Interacts with FloT.

It localises to the cell membrane. It is found in the membrane raft. Involved in a multicomponent binding-protein-dependent transport system for glycine betaine. This Bacillus subtilis (strain 168) protein is Glycine betaine-binding protein OpuAC (opuAC).